The following is a 229-amino-acid chain: Glycine betaine/carnitine/choline transport system permease protein OpuCD (229 aa).

The region spanning 22–202 (FYRHFLMSVY…LMAVIADLVM (181 aa)) is the ABC transmembrane type-1 domain. 5 consecutive transmembrane segments (helical) span residues 27-47 (LMSV…GILI), 55-74 (GWVF…AMLA), 78-100 (LVMG…LPII), 148-168 (ALVI…GGLG), and 182-202 (AIIL…DLVM).

Belongs to the binding-protein-dependent transport system permease family. CysTW subfamily. In terms of assembly, the complex is composed of two ATP-binding proteins (OpuCA), two transmembrane proteins (OpuCB and OpuCD) and a solute-binding protein (OpuCC).

The protein resides in the cell membrane. In terms of biological role, involved in a high affinity multicomponent binding-protein-dependent transport system for glycine betaine, carnitine and choline; probably responsible for the translocation of the substrate across the membrane. This chain is Glycine betaine/carnitine/choline transport system permease protein OpuCD (opuCD), found in Bacillus subtilis (strain 168).